The following is a 372-amino-acid chain: Alanine dehydrogenase 2 (372 aa).

H95 is an active-site residue. 169–199 (KVTIIGGGQAGTNAAKIALGLGADVTILDVN) lines the NAD(+) pocket.

This sequence belongs to the AlaDH/PNT family.

It catalyses the reaction L-alanine + NAD(+) + H2O = pyruvate + NH4(+) + NADH + H(+). It functions in the pathway amino-acid degradation; L-alanine degradation via dehydrogenase pathway; NH(3) and pyruvate from L-alanine: step 1/1. Functionally, may play a role in cell wall synthesis as L-alanine is an important constituent of the peptidoglycan layer. The sequence is that of Alanine dehydrogenase 2 (ald2) from Staphylococcus aureus (strain Mu50 / ATCC 700699).